The primary structure comprises 198 residues: MTWVLASSSPRRKELLAQAGFTQAQFQFVQVSPDIDESQLALETPSAYVTRLALEKAQAGLALSRHLPHPKVIGSDTIVVLDGQLLGKPTDPQDAERMLTSLSGRTHTVMTAVAITNGKRALSRLCQTQVSFTSLSQQDIAKYVATGEPMDKAGAYGIQGLGGCFVSEISGSYSSVVGLPLVETRALLAAMMEQDDTL.

The active-site Proton acceptor is Asp76.

The protein belongs to the Maf family. YhdE subfamily. Requires a divalent metal cation as cofactor.

It localises to the cytoplasm. The catalysed reaction is dTTP + H2O = dTMP + diphosphate + H(+). It carries out the reaction UTP + H2O = UMP + diphosphate + H(+). Functionally, nucleoside triphosphate pyrophosphatase that hydrolyzes dTTP and UTP. May have a dual role in cell division arrest and in preventing the incorporation of modified nucleotides into cellular nucleic acids. In Shewanella denitrificans (strain OS217 / ATCC BAA-1090 / DSM 15013), this protein is dTTP/UTP pyrophosphatase.